The sequence spans 341 residues: Delta(1)-pyrroline-2-carboxylate reductase (341 aa).

The active-site Charge relay system is S47. The active-site Proton donor is the H48. A substrate-binding site is contributed by R52. Position 120-124 (120-124 (HFSAL)) interacts with NADP(+). T160 provides a ligand contact to substrate. An NADP(+)-binding site is contributed by 178-180 (DFA). 186 to 187 (RG) serves as a coordination point for substrate. E188 acts as the Charge relay system in catalysis. Residues 229–230 (HK) and 305–311 (RLPSERR) each bind NADP(+).

This sequence belongs to the LDH2/MDH2 oxidoreductase family. As to quaternary structure, homodimer.

The catalysed reaction is L-proline + NAD(+) = 1-pyrroline-2-carboxylate + NADH + H(+). The enzyme catalyses L-proline + NADP(+) = 1-pyrroline-2-carboxylate + NADPH + H(+). Catalyzes the reduction of Delta(1)-pyrroline-2-carboxylate (Pyr2C) to L-proline, using NADPH as the electron donor. Is likely involved in a degradation pathway that converts cis- and trans-3-hydroxy-L-proline (c3LHyp and t3LHyp) to L-proline, which would allow S.novella to grow on c3LHyp or t3LHyp as a sole carbon source. This Ancylobacter novellus (strain ATCC 8093 / DSM 506 / JCM 20403 / CCM 1077 / IAM 12100 / NBRC 12443 / NCIMB 10456) (Starkeya novella) protein is Delta(1)-pyrroline-2-carboxylate reductase.